The chain runs to 295 residues: Mitochondrial dicarboxylate transporter (295 aa).

Solcar repeat units lie at residues 4–88 (KQVK…LKEH), 96–188 (TNMW…FKNF), and 198–286 (KKNS…LKKY). The next 6 membrane-spanning stretches (helical) occupy residues 8-24 (YPWW…VMNT), 63-82 (GLSA…FGMY), 98-122 (MWYL…ADLI), 163-182 (GWKP…VVTY), 204-224 (LTSS…ADVI), and 262-280 (WVPS…FFAM).

This sequence belongs to the mitochondrial carrier (TC 2.A.29) family. In terms of assembly, homodimer.

The protein resides in the mitochondrion inner membrane. Functionally, mitochondrial dicarboxylic transporter catalyzing the exchange of dicarboxylic acids like malate and succinate for inorganic phosphate. Required for growth on ethanol and acetate. The chain is Mitochondrial dicarboxylate transporter (DIC1) from Candida glabrata (strain ATCC 2001 / BCRC 20586 / JCM 3761 / NBRC 0622 / NRRL Y-65 / CBS 138) (Yeast).